A 355-amino-acid chain; its full sequence is Peptide chain release factor 1 (355 aa).

Glutamine 230 carries the post-translational modification N5-methylglutamine.

It belongs to the prokaryotic/mitochondrial release factor family. Post-translationally, methylated by PrmC. Methylation increases the termination efficiency of RF1.

The protein resides in the cytoplasm. Its function is as follows. Peptide chain release factor 1 directs the termination of translation in response to the peptide chain termination codons UAG and UAA. The polypeptide is Peptide chain release factor 1 (Geobacter sulfurreducens (strain ATCC 51573 / DSM 12127 / PCA)).